A 277-amino-acid polypeptide reads, in one-letter code: Phosphoenolpyruvate synthase regulatory protein (277 aa).

Position 157-164 (G157–T164) interacts with ADP.

This sequence belongs to the pyruvate, phosphate/water dikinase regulatory protein family. PSRP subfamily.

The enzyme catalyses [pyruvate, water dikinase] + ADP = [pyruvate, water dikinase]-phosphate + AMP + H(+). It catalyses the reaction [pyruvate, water dikinase]-phosphate + phosphate + H(+) = [pyruvate, water dikinase] + diphosphate. Its function is as follows. Bifunctional serine/threonine kinase and phosphorylase involved in the regulation of the phosphoenolpyruvate synthase (PEPS) by catalyzing its phosphorylation/dephosphorylation. The polypeptide is Phosphoenolpyruvate synthase regulatory protein (Escherichia fergusonii (strain ATCC 35469 / DSM 13698 / CCUG 18766 / IAM 14443 / JCM 21226 / LMG 7866 / NBRC 102419 / NCTC 12128 / CDC 0568-73)).